The primary structure comprises 452 residues: Trigger factor (452 aa).

One can recognise a PPIase FKBP-type domain in the interval Gly171–Ala256.

This sequence belongs to the FKBP-type PPIase family. Tig subfamily.

The protein localises to the cytoplasm. The catalysed reaction is [protein]-peptidylproline (omega=180) = [protein]-peptidylproline (omega=0). In terms of biological role, involved in protein export. Acts as a chaperone by maintaining the newly synthesized protein in an open conformation. Functions as a peptidyl-prolyl cis-trans isomerase. The chain is Trigger factor from Afipia carboxidovorans (strain ATCC 49405 / DSM 1227 / KCTC 32145 / OM5) (Oligotropha carboxidovorans).